The sequence spans 656 residues: Exoribonuclease 2 (656 aa).

Residues 190 to 518 (RSDLTKTPFF…LNHRLIKSVL (329 aa)) form the RNB domain. The 86-residue stretch at 564 to 649 (KWRYKAEIFD…ESGQLIGKLA (86 aa)) folds into the S1 motif domain.

It belongs to the RNR ribonuclease family. RNase II subfamily.

The protein resides in the cytoplasm. The enzyme catalyses Exonucleolytic cleavage in the 3'- to 5'-direction to yield nucleoside 5'-phosphates.. Involved in mRNA degradation. Hydrolyzes single-stranded polyribonucleotides processively in the 3' to 5' direction. This is Exoribonuclease 2 from Psychromonas ingrahamii (strain DSM 17664 / CCUG 51855 / 37).